Consider the following 187-residue polypeptide: Alkyl hydroperoxide reductase C (187 aa).

A Thioredoxin domain is found at 2–157 (SLINTQVQPF…TVRKLKAAQY (156 aa)). Cys47 functions as the Cysteine sulfenic acid (-SOH) intermediate in the catalytic mechanism.

The protein belongs to the peroxiredoxin family. AhpC/Prx1 subfamily. Homodimer; disulfide-linked, upon oxidation. 5 homodimers assemble to form a ring-like decamer.

Its subcellular location is the cytoplasm. The protein resides in the secreted. The catalysed reaction is a hydroperoxide + NADH + H(+) = an alcohol + NAD(+) + H2O. Functionally, thiol-specific peroxidase that catalyzes the reduction of hydrogen peroxide and organic hydroperoxides to water and alcohols, respectively. Plays a role in cell protection against oxidative stress by detoxifying peroxides. This Pseudomonas aeruginosa (strain UCBPP-PA14) protein is Alkyl hydroperoxide reductase C (ahpC).